The chain runs to 269 residues: MKI67 FHA domain-interacting nucleolar phosphoprotein (269 aa).

An RRM domain is found at 45 to 123 (GVLYVGHLPR…RIIKCHVIPP (79 aa)). The disordered stretch occupies residues 234–269 (DEIVIKVKPLPENSDDVEESEEESAEEDEGEEEEAA). Acidic residues predominate over residues 246–269 (NSDDVEESEEESAEEDEGEEEEAA).

The protein localises to the nucleus. It localises to the nucleolus. Its function is as follows. Plays an essential role in early embryonic development. The polypeptide is MKI67 FHA domain-interacting nucleolar phosphoprotein (nifk) (Danio rerio (Zebrafish)).